A 1070-amino-acid chain; its full sequence is Carbamoyl phosphate synthase large chain (1070 aa).

A carboxyphosphate synthetic domain region spans residues Met1–Glu401. Residues Arg129, Arg169, Gly175, Gly176, Lys208, Ile210, Glu215, Gly241, Ile242, His243, Gln284, and Glu298 each contribute to the ATP site. The region spanning Arg133–Val327 is the ATP-grasp 1 domain. Positions 284, 298, and 300 each coordinate Mg(2+). Residues Gln284, Glu298, and Asn300 each coordinate Mn(2+). The tract at residues Ile402–Ser546 is oligomerization domain. Positions Thr547–Gly929 are carbamoyl phosphate synthetic domain. The ATP-grasp 2 domain occupies Glu671 to Leu861. Residues Arg707, Arg746, Val748, Glu752, Gly777, Val778, His779, Ser780, Gln820, and Glu832 each coordinate ATP. Mg(2+) is bound by residues Gln820, Glu832, and Asn834. Residues Gln820, Glu832, and Asn834 each coordinate Mn(2+). An MGS-like domain is found at Thr930–Val1070. The tract at residues Thr930–Val1070 is allosteric domain.

Belongs to the CarB family. As to quaternary structure, composed of two chains; the small (or glutamine) chain promotes the hydrolysis of glutamine to ammonia, which is used by the large (or ammonia) chain to synthesize carbamoyl phosphate. Tetramer of heterodimers (alpha,beta)4. Mg(2+) is required as a cofactor. The cofactor is Mn(2+).

It catalyses the reaction hydrogencarbonate + L-glutamine + 2 ATP + H2O = carbamoyl phosphate + L-glutamate + 2 ADP + phosphate + 2 H(+). It carries out the reaction hydrogencarbonate + NH4(+) + 2 ATP = carbamoyl phosphate + 2 ADP + phosphate + 2 H(+). The protein operates within amino-acid biosynthesis; L-arginine biosynthesis; carbamoyl phosphate from bicarbonate: step 1/1. It participates in pyrimidine metabolism; UMP biosynthesis via de novo pathway; (S)-dihydroorotate from bicarbonate: step 1/3. Large subunit of the glutamine-dependent carbamoyl phosphate synthetase (CPSase). CPSase catalyzes the formation of carbamoyl phosphate from the ammonia moiety of glutamine, carbonate, and phosphate donated by ATP, constituting the first step of 2 biosynthetic pathways, one leading to arginine and/or urea and the other to pyrimidine nucleotides. The large subunit (synthetase) binds the substrates ammonia (free or transferred from glutamine from the small subunit), hydrogencarbonate and ATP and carries out an ATP-coupled ligase reaction, activating hydrogencarbonate by forming carboxy phosphate which reacts with ammonia to form carbamoyl phosphate. This is Carbamoyl phosphate synthase large chain from Listeria monocytogenes serotype 4b (strain CLIP80459).